The chain runs to 71 residues: uncharacterized protein (71 aa).

The helical transmembrane segment at 12–32 threads the bilayer; that stretch reads FLVSIAFFGLAPTIPLLAIAL.

The protein resides in the membrane. This is an uncharacterized protein from Sinorhizobium fredii (strain NBRC 101917 / NGR234).